A 195-amino-acid polypeptide reads, in one-letter code: Thymidine kinase (195 aa).

ATP contacts are provided by residues 15–22 (GSMFSGKS) and 88–91 (DEVQ). E89 functions as the Proton acceptor in the catalytic mechanism. Residues C145, C148, C183, and C186 each contribute to the Zn(2+) site.

It belongs to the thymidine kinase family. Homotetramer.

The protein localises to the cytoplasm. It carries out the reaction thymidine + ATP = dTMP + ADP + H(+). The chain is Thymidine kinase from Bacillus cereus (strain ZK / E33L).